The sequence spans 525 residues: GMP synthase [glutamine-hydrolyzing] (525 aa).

The Glutamine amidotransferase type-1 domain occupies 9-207 (RILILDFGSQ…VRDICQCEAL (199 aa)). Cysteine 86 serves as the catalytic Nucleophile. Catalysis depends on residues histidine 181 and glutamate 183. A GMPS ATP-PPase domain is found at 208-400 (WTPAKIIDDA…LGLPYDMLYR (193 aa)). 235-241 (SGGVDSS) lines the ATP pocket.

Homodimer.

The enzyme catalyses XMP + L-glutamine + ATP + H2O = GMP + L-glutamate + AMP + diphosphate + 2 H(+). It functions in the pathway purine metabolism; GMP biosynthesis; GMP from XMP (L-Gln route): step 1/1. Functionally, catalyzes the synthesis of GMP from XMP. This Citrobacter koseri (strain ATCC BAA-895 / CDC 4225-83 / SGSC4696) protein is GMP synthase [glutamine-hydrolyzing].